We begin with the raw amino-acid sequence, 878 residues long: Phosphoenolpyruvate carboxylase (878 aa).

Catalysis depends on residues His140 and Lys545.

It belongs to the PEPCase type 1 family. The cofactor is Mg(2+).

It catalyses the reaction oxaloacetate + phosphate = phosphoenolpyruvate + hydrogencarbonate. Forms oxaloacetate, a four-carbon dicarboxylic acid source for the tricarboxylic acid cycle. In Ectopseudomonas mendocina (strain ymp) (Pseudomonas mendocina), this protein is Phosphoenolpyruvate carboxylase.